The sequence spans 312 residues: MQKDIGRRFQRNKKKINSKPGGAMVASSDVEFSLDGMSIMPQRDGNLQIPNFVKPKSTFATSNIGESNGKRNGDKVRGNRRSKSGHSSYAGSRISGGNSNSHLPSGVASAPAGLGIDKVAVGEVDSHLKSVSSYVSNSSGADRSFSSNSSSDTNSILYAGPTFTHSPAASNLPIPTFLHSPVSEKAEWQPPTGSVNSNMPFQFHQSSSVPSTPSEVAMGHNFCPMSRNDPSLQSIQQTNGFYSGHNSPHTNYSASTPSFNHFNAAGHPTGNITPTLNSPNNGIHCHSTSALDLLFHRDREQRLFRMLRQGSA.

Disordered regions lie at residues 1-26 (MQKD…AMVA) and 45-106 (GNLQ…LPSG). The span at 8 to 17 (RFQRNKKKIN) shows a compositional bias: basic residues. A compositionally biased stretch (basic and acidic residues) spans 68-77 (NGKRNGDKVR). Polar residues predominate over residues 85–103 (GHSSYAGSRISGGNSNSHL).

This is an uncharacterized protein from Schizosaccharomyces pombe (strain 972 / ATCC 24843) (Fission yeast).